Reading from the N-terminus, the 909-residue chain is E3 ubiquitin-protein ligase MARCHF6 (909 aa).

Met-1 bears the N-acetylmethionine mark. The RING-CH-type zinc finger occupies 1–62; that stretch reads MDTAEEDICR…ELCKHRFAFT (62 aa). Residues 1–91 lie on the Cytoplasmic side of the membrane; sequence MDTAEEDICR…LVTSIGTAIR (91 aa). Residues Cys-9, Cys-12, Cys-26, Cys-28, His-36, Cys-39, Cys-52, and Cys-55 each contribute to the Zn(2+) site. Residues 92-112 traverse the membrane as a helical segment; the sequence is YWFHYTLVAFAWLGVVPLTAC. Residues 113–142 lie on the Extracellular side of the membrane; that stretch reads RIYKCLFTGSVSSLLTLPLDMLSTENLLAD. A helical membrane pass occupies residues 143-163; that stretch reads CLQGCFVVTCTLCAFISLVWL. At 164–283 the chain is on the cytoplasmic side; the sequence is REQIVHGGAP…WERMLGLDGS (120 aa). The disordered stretch occupies residues 186–256; sequence AGHHQNEAPV…AADANNGAQD (71 aa). Acidic residues predominate over residues 228–248; that stretch reads QAEEEEEDNEEEDDAGVEDAA. Residues 284 to 304 traverse the membrane as a helical segment; the sequence is LVFLEHVFWVVSLNTLFILVF. At 305–336 the chain is on the extracellular side; sequence AFCPYHIGHFSLVGLGFEEHVQASHFEGLITT. The chain crosses the membrane as a helical span at residues 337-357; that stretch reads IVGYILLAITLIICHALATLV. Residues 358-376 are Cytoplasmic-facing; that stretch reads KFHRSRRLLGVCYIVVKVS. A helical membrane pass occupies residues 377 to 397; that stretch reads LLVVVEIGVFPLICGWWLDIC. Residues 398-421 are Extracellular-facing; sequence SLEMFDATLKDRELSFQSAPGTTM. The helical transmembrane segment at 422-442 threads the bilayer; the sequence is FLHWLVGMVYVFYFASFILLL. Over 443 to 480 the chain is Cytoplasmic; that stretch reads REVLRPGVLWFLRNLNDPDFNPVQEMIHLPIYRHLRRF. A helical transmembrane segment spans residues 481-501; that stretch reads ILSVIVFGSIVLLMLWLPIRI. The Extracellular portion of the chain corresponds to 502 to 519; it reads IKSLLPNFLPYNVMLYSD. A helical transmembrane segment spans residues 520–540; the sequence is APVSELSLELLLLQVVLPALL. The Cytoplasmic portion of the chain corresponds to 541-631; sequence EQGHTRQWLK…YRRPLNFPLR (91 aa). The chain crosses the membrane as a helical span at residues 632-652; that stretch reads IFLLIVFMCITLLIASLICLT. Topologically, residues 653–677 are extracellular; sequence LPVFAGRWLMSFWTGTAKIHELYTA. Residues 678-698 traverse the membrane as a helical segment; the sequence is ACGLYVCWLTIRAVTVLVAWM. Residues 699-720 are Cytoplasmic-facing; that stretch reads PQGRRVIFQKVKEWSLMIMKTL. Residues 721–741 form a helical membrane-spanning segment; that stretch reads IVAVLLAGVVPLLLGLLFELV. The Extracellular portion of the chain corresponds to 742–763; the sequence is IVAPLRVPLDQTPLFYPWQDWA. The chain crosses the membrane as a helical span at residues 764–784; that stretch reads LGVLHAKIIAAITLMGPQWWL. The Cytoplasmic segment spans residues 785–814; that stretch reads KTVIEQVYANGIRNIDLHYIIRKLAAPVIS. A helical transmembrane segment spans residues 815-835; that stretch reads VLLLSLCVPYVIASGAVPLLG. Topologically, residues 836–847 are extracellular; that stretch reads VTAEMQNLVHRR. A helical membrane pass occupies residues 848 to 868; that stretch reads IYPFLLMVVVLMGILSFQVRQ. The Cytoplasmic segment spans residues 869–909; it reads FKRLYEHIKNDKYLVGQRLVNYERKSGKQGPSTPPPVSSQE.

The protein belongs to the DOA10/MARCHF6 family. Interacts with DIO2. Interacts with SQLE. Auto-ubiquitinated, which results in proteasomal degradation. Deubiquitinated by USP19; protecting MARCHF6 from p97-mediated proteasomal degradation.

The protein resides in the endoplasmic reticulum membrane. The catalysed reaction is S-ubiquitinyl-[E2 ubiquitin-conjugating enzyme]-L-cysteine + [acceptor protein]-L-lysine = [E2 ubiquitin-conjugating enzyme]-L-cysteine + N(6)-ubiquitinyl-[acceptor protein]-L-lysine.. It participates in protein modification; protein ubiquitination. Its function is as follows. Endoplasmic reticulum membrane-associated E3 ubiquitin ligase that plays a critical role in mitigating endoplasmic reticulum stress, the regulation of cholesterol and lipid homeostasis, and ferroptosis. Acts as a pivotal component of both the Ac/N-degron pathway (targeting the N-terminal acetyl group of substrates) and the ER-associated protein degradation-cytosol (ERAD-C) pathway (targeting misfolded substrates). For instance, mediates the degradation of Ac/N-degron-bearing proteins such as the G-protein regulator RGS2 and the lipid droplet protein PLIN2. Suppresses endoplasmic reticulum stress and ferroptosis through cytosolic POMC degradation. Prevents ferroptosis by acting as a NADPH sensor during lipid peroxidation through its C-terminal regulatory region. Facilitates also the degradation of selected endoplasmic reticulum proteins by associating with signal peptide peptidase for the turnover of endogenous tail-anchored proteins. Promotes ubiquitination of DIO2, leading to its degradation. By ubiquitinating and thereby modulating the stability of many proteins of the cholesterol pathway including SQLE, CYP51A1, CYP11A1 and HMGCR, acts as a crucial post-translational regulator of cholesterol synthesis. This chain is E3 ubiquitin-protein ligase MARCHF6 (Marchf6), found in Mus musculus (Mouse).